The chain runs to 964 residues: uncharacterized protein (964 aa).

Positions 97 to 117 (DSESDVGSDAESDAESDAESD) are enriched in acidic residues. The disordered stretch occupies residues 97-208 (DSESDVGSDA…SNSIDNESES (112 aa)). Residues 121–148 (HTQNNTNTPINNITLINLDSSNNSTQSD) show a composition bias toward low complexity. A compositionally biased stretch (acidic residues) spans 149–163 (NESDNESDNESDNES). Low complexity predominate over residues 192 to 203 (NSDNIGNSNSID).

This is an uncharacterized protein from Acanthamoeba polyphaga (Amoeba).